The primary structure comprises 639 residues: ATP-dependent zinc metalloprotease FtsH (639 aa).

The Cytoplasmic segment spans residues 1–20 (MNGNNNMNNNGKSNNKKKNK). A helical transmembrane segment spans residues 21 to 41 (NWILGLVVVFLISAIFMSYFI). The Periplasmic segment spans residues 42-120 (RGGESYKNVP…LSSGKSQASL (79 aa)). Residues 121-141 (IGVLLQTLPWILFFIFFFFIF) traverse the membrane as a helical segment. At 142 to 639 (RQTQGGGGKV…KEVKGEDVKG (498 aa)) the chain is on the cytoplasmic side. 212 to 219 (GSPGTGKT) contacts ATP. H434 is a binding site for Zn(2+). E435 is a catalytic residue. Residues H438 and D510 each coordinate Zn(2+).

This sequence in the central section; belongs to the AAA ATPase family. It in the C-terminal section; belongs to the peptidase M41 family. In terms of assembly, homohexamer. Zn(2+) is required as a cofactor.

It localises to the cell inner membrane. In terms of biological role, acts as a processive, ATP-dependent zinc metallopeptidase for both cytoplasmic and membrane proteins. Plays a role in the quality control of integral membrane proteins. The chain is ATP-dependent zinc metalloprotease FtsH from Borreliella burgdorferi (strain ZS7) (Borrelia burgdorferi).